The sequence spans 79 residues: Large ribosomal subunit protein uL29 (79 aa).

This sequence belongs to the universal ribosomal protein uL29 family.

The chain is Large ribosomal subunit protein uL29 from Gluconacetobacter diazotrophicus (strain ATCC 49037 / DSM 5601 / CCUG 37298 / CIP 103539 / LMG 7603 / PAl5).